A 161-amino-acid chain; its full sequence is 3-isopropylmalate dehydratase small subunit (161 aa).

This sequence belongs to the LeuD family. LeuD type 2 subfamily. Heterodimer of LeuC and LeuD.

The catalysed reaction is (2R,3S)-3-isopropylmalate = (2S)-2-isopropylmalate. Its pathway is amino-acid biosynthesis; L-leucine biosynthesis; L-leucine from 3-methyl-2-oxobutanoate: step 2/4. Functionally, catalyzes the isomerization between 2-isopropylmalate and 3-isopropylmalate, via the formation of 2-isopropylmaleate. The polypeptide is 3-isopropylmalate dehydratase small subunit (Clostridium beijerinckii (strain ATCC 51743 / NCIMB 8052) (Clostridium acetobutylicum)).